A 186-amino-acid polypeptide reads, in one-letter code: dCTP deaminase (186 aa).

Residue lysine 106–arginine 111 coordinates dCTP. Glutamate 132 functions as the Proton donor/acceptor in the catalytic mechanism. DCTP is bound by residues glutamine 151, tyrosine 166, and glutamine 176.

This sequence belongs to the dCTP deaminase family. As to quaternary structure, homotrimer.

The enzyme catalyses dCTP + H2O + H(+) = dUTP + NH4(+). The protein operates within pyrimidine metabolism; dUMP biosynthesis; dUMP from dCTP (dUTP route): step 1/2. In terms of biological role, catalyzes the deamination of dCTP to dUTP. This Nautilia profundicola (strain ATCC BAA-1463 / DSM 18972 / AmH) protein is dCTP deaminase.